The chain runs to 344 residues: Zinc transporter 9 (344 aa).

A helical transmembrane segment spans residues Met1–Leu21. Over Pro22–Gly30 the chain is Cytoplasmic. A helical transmembrane segment spans residues Ala31–Gly51. Residues Ser52 to Glu72 lie on the Extracellular side of the membrane. The helical transmembrane segment at Phe73–Tyr93 threads the bilayer. The Cytoplasmic segment spans residues Glu94–His188. Residues Val189 to Ser209 form a helical membrane-spanning segment. The Extracellular portion of the chain corresponds to Leu210–Pro221. Residues Leu222–Ala242 traverse the membrane as a helical segment. The Cytoplasmic portion of the chain corresponds to Glu243 to Ser251. The helical transmembrane segment at Ala252–Ile272 threads the bilayer. Topologically, residues Ala273–Asp291 are extracellular. A helical membrane pass occupies residues Ser292 to Leu312. The Cytoplasmic segment spans residues Ser313–Gln323. A helical transmembrane segment spans residues Val324–Ala344.

The protein belongs to the ZIP transporter (TC 2.A.5) family.

The protein localises to the cell membrane. Its function is as follows. Zinc transporter involved in zinc uptake in roots. Targeted by BZIP19 transcription factor in response to zinc-deficient conditions. The protein is Zinc transporter 9 (ZIP9) of Arabidopsis thaliana (Mouse-ear cress).